A 301-amino-acid chain; its full sequence is Glycine--tRNA ligase alpha subunit (301 aa).

This sequence belongs to the class-II aminoacyl-tRNA synthetase family. As to quaternary structure, tetramer of two alpha and two beta subunits.

Its subcellular location is the cytoplasm. It catalyses the reaction tRNA(Gly) + glycine + ATP = glycyl-tRNA(Gly) + AMP + diphosphate. This is Glycine--tRNA ligase alpha subunit from Shewanella piezotolerans (strain WP3 / JCM 13877).